The primary structure comprises 216 residues: Small ribosomal subunit protein uS3c (216 aa).

Positions 43–118 constitute a KH type-2 domain; that stretch reads IKNYIQKNRR…RLKIAITRVE (76 aa).

It belongs to the universal ribosomal protein uS3 family. Part of the 30S ribosomal subunit.

The protein localises to the plastid. Its subcellular location is the chloroplast. The polypeptide is Small ribosomal subunit protein uS3c (rps3) (Dioscorea elephantipes (Elephant's foot yam)).